Here is a 147-residue protein sequence, read N- to C-terminus: Ribosome-binding factor A (147 aa).

The interval 122 to 147 (QQQFGSVDDDVIENDIEESDDTEGKV) is disordered. The segment covering 128 to 147 (VDDDVIENDIEESDDTEGKV) has biased composition (acidic residues).

Belongs to the RbfA family. In terms of assembly, monomer. Binds 30S ribosomal subunits, but not 50S ribosomal subunits or 70S ribosomes.

The protein localises to the cytoplasm. In terms of biological role, one of several proteins that assist in the late maturation steps of the functional core of the 30S ribosomal subunit. Associates with free 30S ribosomal subunits (but not with 30S subunits that are part of 70S ribosomes or polysomes). Required for efficient processing of 16S rRNA. May interact with the 5'-terminal helix region of 16S rRNA. The polypeptide is Ribosome-binding factor A (Shewanella oneidensis (strain ATCC 700550 / JCM 31522 / CIP 106686 / LMG 19005 / NCIMB 14063 / MR-1)).